We begin with the raw amino-acid sequence, 186 residues long: Putative thiamine-phosphate synthase 2 (186 aa).

Residues 35–39 (QLREK) and Asn67 contribute to the 4-amino-2-methyl-5-(diphosphooxymethyl)pyrimidine site. Glu68 lines the Mg(2+) pocket. Ser105 provides a ligand contact to 4-amino-2-methyl-5-(diphosphooxymethyl)pyrimidine. Residue 131-133 (TSS) coordinates 2-[(2R,5Z)-2-carboxy-4-methylthiazol-5(2H)-ylidene]ethyl phosphate. Residue His134 coordinates 4-amino-2-methyl-5-(diphosphooxymethyl)pyrimidine. Residues Gly161 and 181–182 (IS) each bind 2-[(2R,5Z)-2-carboxy-4-methylthiazol-5(2H)-ylidene]ethyl phosphate.

The protein belongs to the thiamine-phosphate synthase family. It depends on Mg(2+) as a cofactor.

The catalysed reaction is 2-[(2R,5Z)-2-carboxy-4-methylthiazol-5(2H)-ylidene]ethyl phosphate + 4-amino-2-methyl-5-(diphosphooxymethyl)pyrimidine + 2 H(+) = thiamine phosphate + CO2 + diphosphate. It carries out the reaction 2-(2-carboxy-4-methylthiazol-5-yl)ethyl phosphate + 4-amino-2-methyl-5-(diphosphooxymethyl)pyrimidine + 2 H(+) = thiamine phosphate + CO2 + diphosphate. It catalyses the reaction 4-methyl-5-(2-phosphooxyethyl)-thiazole + 4-amino-2-methyl-5-(diphosphooxymethyl)pyrimidine + H(+) = thiamine phosphate + diphosphate. Its pathway is cofactor biosynthesis; thiamine diphosphate biosynthesis; thiamine phosphate from 4-amino-2-methyl-5-diphosphomethylpyrimidine and 4-methyl-5-(2-phosphoethyl)-thiazole: step 1/1. In terms of biological role, condenses 4-methyl-5-(beta-hydroxyethyl)thiazole monophosphate (THZ-P) and 2-methyl-4-amino-5-hydroxymethyl pyrimidine pyrophosphate (HMP-PP) to form thiamine monophosphate (TMP). The chain is Putative thiamine-phosphate synthase 2 (thiE2) from Aquifex aeolicus (strain VF5).